Reading from the N-terminus, the 569-residue chain is Probable ABC transporter permease protein y4fN (569 aa).

A run of 13 helical transmembrane segments spans residues 10-30 (VFYW…LLVP), 68-88 (VWMT…QVAV), 98-118 (GFLK…AAAG), 121-141 (FTYG…PSLP), 145-165 (FIGW…FHFL), 196-216 (VVLP…LITA), 247-267 (PDMA…LILL), 304-324 (LAYL…LFSF), 363-383 (MSSI…PIMV), 395-415 (ICFV…LIVA), 426-446 (LVLL…SLPL), 480-500 (VVLP…FNNL), and 534-554 (AAVS…VILI). The 205-residue stretch at 64–268 (LWNTVWMTAA…LVLMGLILLS (205 aa)) folds into the ABC transmembrane type-1 1 domain. The ABC transmembrane type-1 2 domain maps to 357–551 (FFNSMLMSSI…TLIMAFSLAV (195 aa)).

This sequence belongs to the binding-protein-dependent transport system permease family. CysTW subfamily.

It is found in the cell inner membrane. Probably part of the binding-protein-dependent transport system y4fNOP. Probably responsible for the translocation of the substrate across the membrane. This is Probable ABC transporter permease protein y4fN from Sinorhizobium fredii (strain NBRC 101917 / NGR234).